The following is a 148-amino-acid chain: uncharacterized protein (148 aa).

Positions 4-65 constitute an HTH asnC-type domain; that stretch reads LDKVDIQLVK…IPDLDKLGYM (62 aa). The segment at residues 23–42 is a DNA-binding region (H-T-H motif); it reads YRELAELMNTTRQRIARRIT.

This is an uncharacterized protein from Pyrococcus abyssi (strain GE5 / Orsay).